Reading from the N-terminus, the 804-residue chain is Probable replication endonuclease from prophage-like region 2 (804 aa).

Residues Tyr-503 and Tyr-507 each act as O-(5'-phospho-DNA)-tyrosine intermediate in the active site.

The protein belongs to the phage GPA family.

Possible endonuclease which induces a single-strand cut and initiates DNA replication. This is Probable replication endonuclease from prophage-like region 2 from Salmonella typhi.